The chain runs to 101 residues: Urease subunit beta (101 aa).

The protein belongs to the urease beta subunit family. As to quaternary structure, heterotrimer of UreA (gamma), UreB (beta) and UreC (alpha) subunits. Three heterotrimers associate to form the active enzyme.

It is found in the cytoplasm. The catalysed reaction is urea + 2 H2O + H(+) = hydrogencarbonate + 2 NH4(+). It participates in nitrogen metabolism; urea degradation; CO(2) and NH(3) from urea (urease route): step 1/1. This is Urease subunit beta from Ruegeria sp. (strain TM1040) (Silicibacter sp.).